The sequence spans 417 residues: Sulfate adenylyltransferase (417 aa).

Residues 1–10 are compositionally biased toward polar residues; sequence MTSITANQKP. A disordered region spans residues 1–20; the sequence is MTSITANQKPSKLVPPHGSP.

The protein belongs to the sulfate adenylyltransferase family.

It catalyses the reaction sulfate + ATP + H(+) = adenosine 5'-phosphosulfate + diphosphate. The protein operates within sulfur metabolism; hydrogen sulfide biosynthesis; sulfite from sulfate: step 1/3. In Psychrobacter arcticus (strain DSM 17307 / VKM B-2377 / 273-4), this protein is Sulfate adenylyltransferase.